Reading from the N-terminus, the 463-residue chain is Glutamate--tRNA ligase 1 (463 aa).

Residues 10–20 (PSPTGYLHIGG) carry the 'HIGH' region motif. Positions 238-242 (KLSKR) match the 'KMSKS' region motif. Lys-241 contacts ATP.

Belongs to the class-I aminoacyl-tRNA synthetase family. Glutamate--tRNA ligase type 1 subfamily. Monomer.

It localises to the cytoplasm. The catalysed reaction is tRNA(Glu) + L-glutamate + ATP = L-glutamyl-tRNA(Glu) + AMP + diphosphate. Its function is as follows. Catalyzes the attachment of glutamate to tRNA(Glu) in a two-step reaction: glutamate is first activated by ATP to form Glu-AMP and then transferred to the acceptor end of tRNA(Glu). This is Glutamate--tRNA ligase 1 from Helicobacter pylori (strain ATCC 700392 / 26695) (Campylobacter pylori).